Consider the following 80-residue polypeptide: RNA-binding protein Hfq (80 aa).

A Sm domain is found at 10 to 69; it reads DPFLNALRKEHVPVSIYLVNGIKLQGNIESFDQYVVLLRNTVTQMVYKHAISTVVPARPV.

This sequence belongs to the Hfq family. As to quaternary structure, homohexamer.

In terms of biological role, RNA chaperone that binds small regulatory RNA (sRNAs) and mRNAs to facilitate mRNA translational regulation in response to envelope stress, environmental stress and changes in metabolite concentrations. Also binds with high specificity to tRNAs. This Burkholderia ambifaria (strain ATCC BAA-244 / DSM 16087 / CCUG 44356 / LMG 19182 / AMMD) (Burkholderia cepacia (strain AMMD)) protein is RNA-binding protein Hfq.